A 910-amino-acid polypeptide reads, in one-letter code: p53-induced death domain-containing protein 1 (910 aa).

Residues 1–25 (MAATVEGPELEAAAAAGDASEDSDA) are disordered. An N-acetylalanine modification is found at alanine 2. 7 LRR repeats span residues 126-147 (HLAHLDLSFNSLETLPACVLQM), 149-171 (GLGALLLSHNCLSELPEALGALP), 172-194 (ALTFLTVTHNRLQTLPPALGALS), 195-216 (TLQRLDLSQNLLDTLPPEIGGL), 218-240 (SLLELNLASNRLQSLPASLAGLR), 241-263 (SLRLLVLHSNLLASVPADLARLP), and 264-285 (LLTRLDLRDNQLRDLPPELLDA). Phosphoserine occurs at positions 299 and 305. 2 consecutive ZU5 domains span residues 322–454 (DLDS…VSRP) and 455–596 (VSNA…WYTT). 2 peptidase S68 regions span residues 423-452 (DLETYLEEEAPQRLWAHCQVPHFSWFLVVS) and 566-594 (DITAQVVLELTHLYARFQVTHFSWYWLWY). Residues histidine 444, serine 446, histidine 586, and serine 588 contribute to the active site. The interval 580-716 (ARFQVTHFSW…TTTLDREAQA (137 aa)) is UPA domain. A Death domain is found at 788–873 (TQSNLLSVAG…DVAEEVRAVL (86 aa)). Positions 884–910 (IRRMGLAPKDPALPGSSAPQPPEPAQA) are disordered.

In terms of assembly, forms a complex named the PIDDosome with CASP2 and CRADD. Forms a complex with IKBKG and RIPK1. Interacts with FADD and MADD. Undergoes autoproteolytic processing whose extent either directs cells towards survival or apoptotic pathways. Autoproteolytically cleaved into two main fragments PIDD-N and PIDD-C. PIDD-C can be further processed into PIDD-CC, a processing which is enhanced by DNA damage. The cleavage producing PIDD-C is required for translocation of PIDD1 to the nucleus upon DNA damage and activation of NF-kappa-B. PIDD-CC mediates the interaction with CRADD and the cleavage producing PIDD-CC is required for the activation of CASP2. PIDD-N remains associated with PIDD-C and PIDD-CC after cleavage. As to expression, ubiquitous.

Its subcellular location is the cytoplasm. It is found in the nucleus. Functionally, component of the DNA damage/stress response pathway that functions downstream of p53/TP53 and can either promote cell survival or apoptosis. Associated with CRADD and the CASP2 caspase, it forms the PIDDosome a complex that activates CASP2 and triggers apoptosis. Associated with IKBKG and RIPK1, it enhances sumoylation and ubiquitination of IKBKG which is important for activation of the transcription factor NF-kappa-B. The polypeptide is p53-induced death domain-containing protein 1 (Homo sapiens (Human)).